Consider the following 276-residue polypeptide: 2-dehydro-3-deoxyphosphooctonate aldolase (276 aa).

The protein belongs to the KdsA family.

Its subcellular location is the cytoplasm. The enzyme catalyses D-arabinose 5-phosphate + phosphoenolpyruvate + H2O = 3-deoxy-alpha-D-manno-2-octulosonate-8-phosphate + phosphate. It participates in carbohydrate biosynthesis; 3-deoxy-D-manno-octulosonate biosynthesis; 3-deoxy-D-manno-octulosonate from D-ribulose 5-phosphate: step 2/3. This Stenotrophomonas maltophilia (strain K279a) protein is 2-dehydro-3-deoxyphosphooctonate aldolase.